Here is a 601-residue protein sequence, read N- to C-terminus: MEGSDFLLAGVLFLFAAVAAVPLASRLGIGAVLGYLLAGIAIGPWGLGFISDVDEILHFSELGVVFLMFIIGLELNPSKLWQLRRSIFGVGAAQVLLSAALLAGLLMLTDFAWQAAVVGGIGLAMSSTAMALQLMRDKGMNRSESGQLGFSVLLFQDLAVIPALALVPLLAGSADEHFDWMKIGMKVLAFVGMLIGGRYLLRPVFRFIAASGVREVFTAATLLLVLGSALFMDALGLSMALGTFIAGVLLAESEYRHELETAIDPFKGLLLGLFFISVGMSLNLGVLYTHLLWVVIAVVVLVAVKILVLYLLARLYGVRSSERMQFAGVLSQGGEFAFVLFSTASSQRLFQGDQMALLLVTVTLSMMTTPLLMKLVDKWLSRQFNGPEEEDEKPWVNDDKPQVIVVGFGRFGQVIGRLLMANKMRITVLERDISAVNLMRKYGYKVYYGDATQVDLLRSAGAEAAESIVITCNEPEDTMKLVEICQQHFPHLHILARARGRVEAHELLQAGVTQFSRETFSSALELGRKTLVTLGMHPHQAQRAQLHFRRLDMRMLRELIPMHADTVQISRAREARRELEEIFQREMQQERRQLDGWDEFE.

The next 13 helical transmembrane spans lie at 4–24, 29–49, 55–75, 87–107, 115–135, 152–172, 177–197, 207–227, 230–250, 268–288, 291–311, 324–344, and 356–376; these read SDFL…VPLA, IGAV…GLGF, EILH…GLEL, IFGV…GLLM, AAVV…LQLM, VLLF…LLAG, HFDW…LIGG, FIAA…LVLG, LFMD…GVLL, GLLL…GVLY, LLWV…VLYL, MQFA…FSTA, and ALLL…MKLV. Positions 400–519 constitute an RCK N-terminal domain; it reads KPQVIVVGFG…AGVTQFSRET (120 aa).

Belongs to the monovalent cation:proton antiporter 2 (CPA2) transporter (TC 2.A.37) family. KefB subfamily. In terms of assembly, interacts with the regulatory subunit KefG.

The protein localises to the cell inner membrane. Its function is as follows. Pore-forming subunit of a potassium efflux system that confers protection against electrophiles. Catalyzes K(+)/H(+) antiport. The sequence is that of Glutathione-regulated potassium-efflux system protein KefB from Escherichia coli O17:K52:H18 (strain UMN026 / ExPEC).